Consider the following 565-residue polypeptide: Membrane protein insertase YidC (565 aa).

6 helical membrane passes run 6-26 (VLLI…WGKN), 348-368 (LMAL…SLLH), 370-390 (WGWA…PLSA), 437-457 (GGCF…WVLV), 479-499 (PYFI…KLTP), and 516-536 (PLIF…YWVI).

This sequence belongs to the OXA1/ALB3/YidC family. Type 1 subfamily. In terms of assembly, interacts with the Sec translocase complex via SecD. Specifically interacts with transmembrane segments of nascent integral membrane proteins during membrane integration.

The protein resides in the cell inner membrane. Required for the insertion and/or proper folding and/or complex formation of integral membrane proteins into the membrane. Involved in integration of membrane proteins that insert both dependently and independently of the Sec translocase complex, as well as at least some lipoproteins. Aids folding of multispanning membrane proteins. The polypeptide is Membrane protein insertase YidC (Xylella fastidiosa (strain M12)).